Consider the following 141-residue polypeptide: Galactose-6-phosphate isomerase subunit LacA (141 aa).

Belongs to the LacAB/RpiB family. Heteromultimeric protein consisting of LacA and LacB.

The catalysed reaction is aldehydo-D-galactose 6-phosphate = keto-D-tagatose 6-phosphate. It functions in the pathway carbohydrate metabolism; D-galactose 6-phosphate degradation; D-tagatose 6-phosphate from D-galactose 6-phosphate: step 1/1. This Streptococcus pneumoniae (strain P1031) protein is Galactose-6-phosphate isomerase subunit LacA.